We begin with the raw amino-acid sequence, 194 residues long: MRKAEVKRKTKETDIYAELNIDGKGNYDIATGIGFFDHMLSLFAKHGLFDLKVVAKGDLEVDTHHTVEDVGIVLGNAFLKAAGDKKSIKRFSTFYVPMDEALVRVSVDISGRSFLYCDLPLKAERVGNFETENVEEFLRAFAYNFGITLHVELLHGGNSHHIIEATFKALGRALDEALRIDERAEGIPSTKGIL.

This sequence belongs to the imidazoleglycerol-phosphate dehydratase family.

Its subcellular location is the cytoplasm. The catalysed reaction is D-erythro-1-(imidazol-4-yl)glycerol 3-phosphate = 3-(imidazol-4-yl)-2-oxopropyl phosphate + H2O. The protein operates within amino-acid biosynthesis; L-histidine biosynthesis; L-histidine from 5-phospho-alpha-D-ribose 1-diphosphate: step 6/9. The protein is Imidazoleglycerol-phosphate dehydratase of Thermoanaerobacter sp. (strain X514).